The primary structure comprises 1124 residues: Phytochrome type A (1124 aa).

A compositionally biased stretch (low complexity) spans 1-19 (MSTTRPSQSSNNSGRSRNS). Positions 1–21 (MSTTRPSQSSNNSGRSRNSAR) are disordered. One can recognise a GAF domain in the interval 218–401 (SMERLCDTMV…VFAIHVNKEI (184 aa)). Residue Cys323 coordinates phytochromobilin. PAS domains lie at 617-687 (VTSE…LQGE) and 750-821 (DYKA…VNFG). Positions 901–1120 (YMKRQIRNPL…ILSVELAAAH (220 aa)) constitute a Histidine kinase domain.

Belongs to the phytochrome family. In terms of assembly, homodimer. Contains one covalently linked phytochromobilin chromophore.

Regulatory photoreceptor which exists in two forms that are reversibly interconvertible by light: the Pr form that absorbs maximally in the red region of the spectrum and the Pfr form that absorbs maximally in the far-red region. Photoconversion of Pr to Pfr induces an array of morphogenic responses, whereas reconversion of Pfr to Pr cancels the induction of those responses. Pfr controls the expression of a number of nuclear genes including those encoding the small subunit of ribulose-bisphosphate carboxylase, chlorophyll A/B binding protein, protochlorophyllide reductase, rRNA, etc. It also controls the expression of its own gene(s) in a negative feedback fashion. This Lathyrus sativus (White vetchling) protein is Phytochrome type A (PHYA).